We begin with the raw amino-acid sequence, 467 residues long: MAP kinase-interacting serine/threonine-protein kinase 2 (467 aa).

One can recognise a Protein kinase domain in the interval 83-367 (QLQQEILGEG…AAQVLQHPWV (285 aa)). ATP-binding positions include 89–97 (LGEGAYAKV) and Lys112. Asp204 serves as the catalytic Proton acceptor. Residues Cys298, Cys310, and Cys313 each contribute to the Zn(2+) site. Residues 432–467 (MQLSPPSESKLAKRRQQGSKGGISPPSLAPLLIVSD) are disordered.

This sequence belongs to the protein kinase superfamily. CAMK Ser/Thr protein kinase family. Mg(2+) serves as cofactor. Zn(2+) is required as a cofactor.

The enzyme catalyses L-seryl-[protein] + ATP = O-phospho-L-seryl-[protein] + ADP + H(+). The catalysed reaction is L-threonyl-[protein] + ATP = O-phospho-L-threonyl-[protein] + ADP + H(+). Functionally, may play a role in the response to environmental stress and cytokines. Appears to regulate translation by phosphorylating EIF4E, thus increasing the affinity of this protein for the 7-methylguanosine-containing mRNA cap. The chain is MAP kinase-interacting serine/threonine-protein kinase 2 (mknk2) from Xenopus laevis (African clawed frog).